The following is an 89-amino-acid chain: Small ribosomal subunit protein uS15 (89 aa).

The protein belongs to the universal ribosomal protein uS15 family. Part of the 30S ribosomal subunit. Forms a bridge to the 50S subunit in the 70S ribosome, contacting the 23S rRNA.

Functionally, one of the primary rRNA binding proteins, it binds directly to 16S rRNA where it helps nucleate assembly of the platform of the 30S subunit by binding and bridging several RNA helices of the 16S rRNA. Forms an intersubunit bridge (bridge B4) with the 23S rRNA of the 50S subunit in the ribosome. The polypeptide is Small ribosomal subunit protein uS15 (Parvibaculum lavamentivorans (strain DS-1 / DSM 13023 / NCIMB 13966)).